Here is a 99-residue protein sequence, read N- to C-terminus: uncharacterized protein (99 aa).

The signal sequence occupies residues 1–17; that stretch reads MMMNAFFPAMALIVLVG. Cys18 carries the N-palmitoyl cysteine lipid modification. A lipid anchor (S-diacylglycerol cysteine) is attached at Cys18.

It localises to the cell membrane. This is an uncharacterized protein from Escherichia coli (strain UTI89 / UPEC).